A 204-amino-acid chain; its full sequence is Ubiquitin-conjugating enzyme E2 S (204 aa).

The 147-residue stretch at 14–160 folds into the UBC core domain; it reads QIIKQVAREI…AKMFTEIHAK (147 aa). C98 (glycyl thioester intermediate) is an active-site residue. The segment covering 165-176 has biased composition (polar residues); sequence SSNNISEGQQES. Residues 165-204 are disordered; the sequence is SSNNISEGQQESLPGKKRVAVNEKMCDKKKKDKKRALKRL. Over residues 191 to 204 the composition is skewed to basic residues; the sequence is DKKKKDKKRALKRL.

It belongs to the ubiquitin-conjugating enzyme family.

It carries out the reaction S-ubiquitinyl-[E1 ubiquitin-activating enzyme]-L-cysteine + [E2 ubiquitin-conjugating enzyme]-L-cysteine = [E1 ubiquitin-activating enzyme]-L-cysteine + S-ubiquitinyl-[E2 ubiquitin-conjugating enzyme]-L-cysteine.. It participates in protein modification; protein ubiquitination. Catalyzes the covalent attachment of ubiquitin to other proteins. Acts as an essential factor of the anaphase promoting complex/cyclosome (APC/C), a cell cycle-regulated ubiquitin ligase that controls progression through mitosis. Acts by specifically elongating polyubiquitin chains initiated by the E2 enzyme UBCH10 on APC/C substrates, enhancing the degradation of APC/C substrates by the proteasome and promoting mitotic exit. In Nematostella vectensis (Starlet sea anemone), this protein is Ubiquitin-conjugating enzyme E2 S.